Reading from the N-terminus, the 264-residue chain is Small ribosomal subunit protein eS1 (264 aa).

Residues 233–264 are disordered; that stretch reads GEGGGAGKPSGDEAGAKVERADGYEPPVQESV. Residues 242 to 255 are compositionally biased toward basic and acidic residues; it reads SGDEAGAKVERADG.

The protein belongs to the eukaryotic ribosomal protein eS1 family. Component of the small ribosomal subunit. Mature ribosomes consist of a small (40S) and a large (60S) subunit. The 40S subunit contains about 33 different proteins and 1 molecule of RNA (18S). The 60S subunit contains about 49 different proteins and 3 molecules of RNA (25S, 5.8S and 5S).

Its subcellular location is the cytoplasm. The protein is Small ribosomal subunit protein eS1 of Eimeria tenella (Coccidian parasite).